Reading from the N-terminus, the 172-residue chain is Small integral membrane protein 23 (172 aa).

Residues 1–36 (MATQQVDSRRQVAAEQVAAQLLERRRGSHCDDEKQT) are Cytoplasmic-facing. A helical; Signal-anchor for type II membrane protein membrane pass occupies residues 37–53 (LLALLILVLYLSTEIWG). At 54 to 172 (SSWEVSERIR…LEISLSGAEL (119 aa)) the chain is on the extracellular side. A coiled-coil region spans residues 96–128 (LKEKLHVFSEKLEEEVQQLEQLAWDLELWLDAL).

The protein localises to the cell membrane. This chain is Small integral membrane protein 23 (SMIM23), found in Homo sapiens (Human).